Here is a 261-residue protein sequence, read N- to C-terminus: uncharacterized protein (261 aa).

A signal peptide spans methionine 1–glycine 22. Cysteine 23 carries the N-palmitoyl cysteine lipid modification. A lipid anchor (S-diacylglycerol cysteine) is attached at cysteine 23.

It belongs to the staphylococcal tandem lipoprotein family.

The protein localises to the cell membrane. This is an uncharacterized protein from Staphylococcus epidermidis (strain ATCC 12228 / FDA PCI 1200).